Here is a 396-residue protein sequence, read N- to C-terminus: MDLKFKVHFALVLLFLAHFGESQTGVFDITKYGANSNADISEALLNAFKEACQSTSPSTIVIPKGTFTMNQVKLEGPCKSPLELQIQATLKAPSDPSQLKVGEWLTVNKLDQFTMSGGGILDGQAAAAWECKQSKKCNKLPNNLSFNSLTNSTIKDITTLDSKSFHVNVNQCKNLTFIRFNVSAPANSPNTDGIHVSRSSSVNITDSNFSTGDDCISVGDETEQLYITRVTCGPGHGISVGSLGGNPDEKPVVGVFVRNCTFTNTDNGVRIKTWPASHPGVVNDVHFEDIIVQNVSNPVVIDQVYCPFNKCNKDLPSQVKISKVSFQNIKGTSRTQDAVSLLRSKGVPCEGIEVGDIDITYSGKEGPAKSSCENIKPSLKGKQNPPVCTASAASSS.

The signal sequence occupies residues 1–22 (MDLKFKVHFALVLLFLAHFGES). Asn143, Asn151, Asn174, Asn181, Asn203, and Asn208 each carry an N-linked (GlcNAc...) asparagine glycan. 2 PbH1 repeats span residues 172-198 (CKNL…HVSR) and 199-220 (SSSV…SVGD). Asp213 functions as the Proton donor in the catalytic mechanism. A disulfide bridge links Cys215 with Cys232. His236 is an active-site residue. PbH1 repeat units lie at residues 252–273 (VVGV…RIKT), 282–303 (VNDV…VIDQ), and 316–356 (PSQV…EVGD). Residues Asn259 and Asn294 are each glycosylated (N-linked (GlcNAc...) asparagine). Positions 364–396 (KEGPAKSSCENIKPSLKGKQNPPVCTASAASSS) are disordered. A disulfide bridge links Cys372 with Cys388.

It belongs to the glycosyl hydrolase 28 family. In terms of tissue distribution, pollen.

Its subcellular location is the secreted. The protein resides in the cell wall. The catalysed reaction is (1,4-alpha-D-galacturonosyl)n+m + H2O = (1,4-alpha-D-galacturonosyl)n + (1,4-alpha-D-galacturonosyl)m.. Its function is as follows. May function in depolymerizing pectin during pollen development, germination, and tube growth. The polypeptide is Polygalacturonase (PG1) (Nicotiana tabacum (Common tobacco)).